A 245-amino-acid chain; its full sequence is Probable phosphatase KPK_3500 (245 aa).

Positions 7, 9, 15, 40, 73, 101, 131, 192, and 194 each coordinate Zn(2+).

The protein belongs to the PHP family. Homotrimer. The cofactor is Zn(2+).

This Klebsiella pneumoniae (strain 342) protein is Probable phosphatase KPK_3500.